The chain runs to 293 residues: MKI67 FHA domain-interacting nucleolar phosphoprotein (293 aa).

At alanine 2 the chain carries N-acetylalanine. Residue lysine 38 forms a Glycyl lysine isopeptide (Lys-Gly) (interchain with G-Cter in SUMO2) linkage. Residues 45–123 enclose the RRM domain; the sequence is GVVYVRHLPN…RLLECHFMPP (79 aa). Omega-N-methylarginine; by PRMT1 and PRMT8 is present on arginine 114. A Glycyl lysine isopeptide (Lys-Gly) (interchain with G-Cter in SUMO2) cross-link involves residue lysine 139. Serine 145 is modified (phosphoserine). Glycyl lysine isopeptide (Lys-Gly) (interchain with G-Cter in SUMO2) cross-links involve residues lysine 179 and lysine 192. A compositionally biased stretch (polar residues) spans 197–207; that stretch reads SKTNRQTSTKG. Residues 197 to 239 form a disordered region; that stretch reads SKTNRQTSTKGQVLRKKKKKVSGTLDTPEKTVDSQGPTPVCTP. The residue at position 218 (serine 218) is a Phosphoserine. Threonine 223 carries the phosphothreonine modification. The segment at 226 to 269 is interaction with MKI67; it reads KTVDSQGPTPVCTPTFLERRKSQVAELNDDDKDDEIVFKQPISC. Serine 230 is subject to Phosphoserine. Residues threonine 234 and threonine 238 each carry the phosphothreonine modification. Omega-N-methylated arginine; by PRMT1 and PRMT8 is present on residues arginine 244 and arginine 245. Serine 247 carries the phosphoserine modification. A Glycyl lysine isopeptide (Lys-Gly) (interchain with G-Cter in SUMO1); alternate cross-link involves residue lysine 271. Lysine 271 is covalently cross-linked (Glycyl lysine isopeptide (Lys-Gly) (interchain with G-Cter in SUMO2); alternate). Positions 271–293 are disordered; it reads KEEIQETQTPTHSRKKRRRSSNQ. Threonine 279 carries the phosphothreonine modification. Residues 282-293 show a composition bias toward basic residues; sequence HSRKKRRRSSNQ. Arginine 284 carries the post-translational modification Omega-N-methylarginine; by PRMT1 and PRMT8.

Binds to the FHA domain of MKI67; this interaction is enhanced in mitosis. Post-translationally, sequentially phosphorylated on Thr-238, Thr-234 and Ser-230. Thr-234 is phosphorylated only when Thr-238 is phosphorylated. Likewise, phosphorylation at Ser-230 requires that Thr-234 and Thr-238 are phosphorylated. Phosphorylation enhances MKI67 binding.

The protein localises to the nucleus. It localises to the nucleolus. It is found in the chromosome. In Homo sapiens (Human), this protein is MKI67 FHA domain-interacting nucleolar phosphoprotein (NIFK).